We begin with the raw amino-acid sequence, 274 residues long: Proteasome subunit beta (274 aa).

Residues 1–52 (MADPLGAAGRLPAVFMTPGTSSFADFLSRSAPHLLPGARSGLPGPVTEVAHG) constitute a propeptide, removed in mature form; by autocatalysis. Thr53 (nucleophile) is an active-site residue.

It belongs to the peptidase T1B family. The 20S proteasome core is composed of 14 alpha and 14 beta subunits that assemble into four stacked heptameric rings, resulting in a barrel-shaped structure. The two inner rings, each composed of seven catalytic beta subunits, are sandwiched by two outer rings, each composed of seven alpha subunits. The catalytic chamber with the active sites is on the inside of the barrel. Has a gated structure, the ends of the cylinder being occluded by the N-termini of the alpha-subunits. Is capped by the proteasome-associated ATPase, ARC.

It is found in the cytoplasm. The catalysed reaction is Cleavage of peptide bonds with very broad specificity.. It functions in the pathway protein degradation; proteasomal Pup-dependent pathway. The formation of the proteasomal ATPase ARC-20S proteasome complex, likely via the docking of the C-termini of ARC into the intersubunit pockets in the alpha-rings, may trigger opening of the gate for substrate entry. Interconversion between the open-gate and close-gate conformations leads to a dynamic regulation of the 20S proteasome proteolysis activity. Functionally, component of the proteasome core, a large protease complex with broad specificity involved in protein degradation. This is Proteasome subunit beta from Frankia casuarinae (strain DSM 45818 / CECT 9043 / HFP020203 / CcI3).